A 484-amino-acid polypeptide reads, in one-letter code: Major extracellular endoglucanase (484 aa).

The first 25 residues, 1-25 (MSIFRTASTLALATALALAAGPAFS), serve as a signal peptide directing secretion. Glutamate 182 (proton donor) is an active-site residue. Glutamate 303 (nucleophile) is an active-site residue. The disordered stretch occupies residues 370–402 (GTAGNTTPTPTPTPTPTPTPTPTPTPTPTPGTS). The tract at residues 375–399 (TTPTPTPTPTPTPTPTPTPTPTPTP) is thr-Pro repeats ('hinge') (Pro-Thr box). Residues 378 to 398 (TPTPTPTPTPTPTPTPTPTPT) are compositionally biased toward pro residues. Residues 395 to 484 (PTPTPGTSTF…TAEFGFCAAS (90 aa)) enclose the CBM2 domain.

It belongs to the glycosyl hydrolase 5 (cellulase A) family.

The enzyme catalyses Endohydrolysis of (1-&gt;4)-beta-D-glucosidic linkages in cellulose, lichenin and cereal beta-D-glucans.. This is Major extracellular endoglucanase (engXCA) from Xanthomonas campestris pv. campestris (strain ATCC 33913 / DSM 3586 / NCPPB 528 / LMG 568 / P 25).